Reading from the N-terminus, the 383-residue chain is 1-deoxy-D-xylulose 5-phosphate reductoisomerase (383 aa).

Residues threonine 10, glycine 11, serine 12, isoleucine 13, glycine 36, arginine 37, asparagine 38, and asparagine 122 each coordinate NADPH. Residue lysine 123 coordinates 1-deoxy-D-xylulose 5-phosphate. Position 124 (glutamate 124) interacts with NADPH. Aspartate 148 serves as a coordination point for Mn(2+). The 1-deoxy-D-xylulose 5-phosphate site is built by serine 149, glutamate 150, serine 174, and histidine 197. Glutamate 150 is a Mn(2+) binding site. Glycine 203 provides a ligand contact to NADPH. Serine 210, asparagine 215, lysine 216, and glutamate 219 together coordinate 1-deoxy-D-xylulose 5-phosphate. Residue glutamate 219 coordinates Mn(2+).

Belongs to the DXR family. Mg(2+) serves as cofactor. Requires Mn(2+) as cofactor.

The catalysed reaction is 2-C-methyl-D-erythritol 4-phosphate + NADP(+) = 1-deoxy-D-xylulose 5-phosphate + NADPH + H(+). The protein operates within isoprenoid biosynthesis; isopentenyl diphosphate biosynthesis via DXP pathway; isopentenyl diphosphate from 1-deoxy-D-xylulose 5-phosphate: step 1/6. Functionally, catalyzes the NADPH-dependent rearrangement and reduction of 1-deoxy-D-xylulose-5-phosphate (DXP) to 2-C-methyl-D-erythritol 4-phosphate (MEP). The protein is 1-deoxy-D-xylulose 5-phosphate reductoisomerase of Bacillus subtilis (strain 168).